We begin with the raw amino-acid sequence, 309 residues long: Elongation factor Ts (309 aa).

The interval 82 to 85 is involved in Mg(2+) ion dislocation from EF-Tu; the sequence is TDFV.

It belongs to the EF-Ts family.

It is found in the cytoplasm. Functionally, associates with the EF-Tu.GDP complex and induces the exchange of GDP to GTP. It remains bound to the aminoacyl-tRNA.EF-Tu.GTP complex up to the GTP hydrolysis stage on the ribosome. The sequence is that of Elongation factor Ts from Rickettsia bellii (strain OSU 85-389).